The chain runs to 1125 residues: Exportin-6 (1125 aa).

Ala-2 is subject to N-acetylalanine. Positions 31-97 (IEELLNNFAQ…RSCLPKLLLA (67 aa)) constitute an Importin N-terminal domain. Ser-199 is modified (phosphoserine). Residues Thr-201 and Thr-204 each carry the phosphothreonine modification. Phosphoserine is present on residues Ser-208 and Ser-224.

The protein belongs to the exportin family. Found in a complex with XPO6, Ran, ACTB and PFN1. Interacts with ACTB. Interacts with ACTB in a RanGTP-dependent manner.

Its subcellular location is the nucleus. It is found in the cytoplasm. Its function is as follows. Mediates the nuclear export of actin and profilin-actin complexes in somatic cells. In Mus musculus (Mouse), this protein is Exportin-6 (Xpo6).